Reading from the N-terminus, the 531-residue chain is Histone-arginine methyltransferase CARMER (531 aa).

In terms of domain architecture, SAM-dependent MTase PRMT-type spans 141 to 450 (ASQYFQFYGY…QSYDVTIDLH (310 aa)). S-adenosyl-L-methionine-binding residues include Gln-154, Arg-163, Gly-187, Glu-209, Glu-238, and Thr-266. Arg-501 carries the asymmetric dimethylarginine; by autocatalysis modification.

Belongs to the class I-like SAM-binding methyltransferase superfamily. Protein arginine N-methyltransferase family. Homodimer. Post-translationally, the dimethylated protein is the major form.

The protein resides in the cytoplasm. It is found in the nucleus. It carries out the reaction L-arginyl-[protein] + 2 S-adenosyl-L-methionine = N(omega),N(omega)-dimethyl-L-arginyl-[protein] + 2 S-adenosyl-L-homocysteine + 2 H(+). Methylates (mono- and asymmetric dimethylation) the guanidino nitrogens of arginyl residues in proteins. May methylate histone H3 at 'Arg-17' and activate transcription via chromatin remodeling. This Drosophila persimilis (Fruit fly) protein is Histone-arginine methyltransferase CARMER (Art4).